A 155-amino-acid chain; its full sequence is Calmodulin, flagellar (155 aa).

4 consecutive EF-hand domains span residues 14-49 (EQIA…LGQN), 50-85 (PTEA…KMKD), 87-122 (DNEE…LGEK), and 123-155 (LTDE…MMQK). Ca(2+)-binding residues include Asp-27, Asp-29, Asp-31, Thr-33, Glu-38, Asp-63, Asp-65, Asn-67, Thr-69, Glu-74, Asp-100, Asp-102, Asn-104, Glu-111, Asp-136, Asp-138, Asp-140, Gln-142, and Glu-147.

It belongs to the calmodulin family.

It is found in the cell projection. It localises to the cilium. Its subcellular location is the flagellum. In terms of biological role, calmodulin mediates the control of a large number of enzymes, ion channels and other proteins by Ca(2+). Among the enzymes to be stimulated by the calmodulin-Ca(2+) complex are a number of protein kinases and phosphatases. The chain is Calmodulin, flagellar (CAM1) from Naegleria gruberi (Amoeba).